A 282-amino-acid polypeptide reads, in one-letter code: ATP synthase gamma chain (282 aa).

This sequence belongs to the ATPase gamma chain family. In terms of assembly, F-type ATPases have 2 components, CF(1) - the catalytic core - and CF(0) - the membrane proton channel. CF(1) has five subunits: alpha(3), beta(3), gamma(1), delta(1), epsilon(1). CF(0) has three main subunits: a, b and c.

The protein localises to the cell membrane. In terms of biological role, produces ATP from ADP in the presence of a proton gradient across the membrane. The gamma chain is believed to be important in regulating ATPase activity and the flow of protons through the CF(0) complex. The protein is ATP synthase gamma chain of Clostridium botulinum (strain Loch Maree / Type A3).